The following is a 403-amino-acid chain: Casein kinase I isoform delta-A (403 aa).

One can recognise a Protein kinase domain in the interval 9-277 (YRLGRKIGSG…YLRQLFRNLF (269 aa)). Residues 15-23 (IGSGSFGDI) and K38 contribute to the ATP site. D128 functions as the Proton acceptor in the catalytic mechanism. An autoinhibitory region spans residues 315–340 (QGRIPLPRVMLPTSSGRPRGTQEVAP). Positions 322–403 (RVMLPTSSGR…PSGLQSAVPR (82 aa)) are disordered.

This sequence belongs to the protein kinase superfamily. Monomer. Interacts with per1 and per2. Component of the circadian core oscillator. In terms of processing, autophosphorylated on serine and threonine residues.

It localises to the cytoplasm. The protein localises to the nucleus. The enzyme catalyses L-seryl-[protein] + ATP = O-phospho-L-seryl-[protein] + ADP + H(+). It carries out the reaction L-threonyl-[protein] + ATP = O-phospho-L-threonyl-[protein] + ADP + H(+). Its activity is regulated as follows. Exhibits substrate-dependent heparin activation. Functionally, casein kinases are operationally defined by their preferential utilization of acidic proteins such as caseins as substrates. Central component of the circadian clock. May act as a negative regulator of circadian rhythmicity by phosphorylating per1 and per2, which may lead to their degradation. Participates in wnt signaling. The protein is Casein kinase I isoform delta-A (csnk1da) of Danio rerio (Zebrafish).